A 471-amino-acid polypeptide reads, in one-letter code: Regulator of microtubule dynamics protein 3 (471 aa).

At 1–12 (MSRLGALGGSRA) the chain is on the mitochondrial intermembrane side. Residues 13–35 (GLGLLLGTAAGLGFLCVLYSQRW) form a helical membrane-spanning segment. At 36 to 471 (KRTQRHGRSQ…LEELEVILGK (436 aa)) the chain is on the cytoplasmic side. A phosphoserine mark is found at serine 44, serine 46, serine 50, and serine 57. Residues 91-125 (LDRLDFVLTSLMALRREVEELQRSLQGLAGEIVGE) adopt a coiled-coil conformation. Positions 157–163 (VYFTASS) match the FFAT motif. Phosphothreonine is present on threonine 160. The disordered stretch occupies residues 168-203 (TDAESEGGYTTANAESDYERDSDKESEDAEDEVSCE). Phosphoserine occurs at positions 183, 193, 212, and 233. The segment covering 191 to 201 (KESEDAEDEVS) has biased composition (acidic residues).

It belongs to the RMDN family. Interacts with PTPN2. Interacts with microtubules. Interacts with VAPB. Interacts (via FFAT motif) with MOSPD2 (via MSP domain). Interacts (via phosphorylated FFAT motif) with MOSPD2, VAPA and VAPB. Post-translationally, phosphorylation at Thr-160 of the FFAT motif activates interaction with MOSPD2, VAPA and VAPB.

The protein resides in the mitochondrion outer membrane. It localises to the cytoplasm. It is found in the nucleus. Its subcellular location is the cytoskeleton. The protein localises to the spindle. The protein resides in the spindle pole. Functionally, involved in cellular calcium homeostasis regulation. May participate in differentiation and apoptosis of keratinocytes. Overexpression induces apoptosis. This chain is Regulator of microtubule dynamics protein 3, found in Rattus norvegicus (Rat).